The following is a 170-amino-acid chain: Calcineurin subunit B type 1 (170 aa).

4 consecutive EF-hand domains span residues 18 to 46, 50 to 85, 87 to 122, and 128 to 163; these read DEIRRLGKRFRKLDLDNSGALSIDEFMSL, QQNPLVQRVIDIFDADGNGEVDFKEFIQGVSQFSVR, DKLSKLRFAFRIYDMDNDGYISNGELFQVLKMMVGN, and QLQQIVDKTICFADKDEDGKISFDEFCSVVGNTDIH. Residues aspartate 31, aspartate 33, serine 35, glutamate 42, aspartate 63, aspartate 65, asparagine 67, glutamate 69, glutamate 74, aspartate 100, aspartate 102, aspartate 104, tyrosine 106, glutamate 111, aspartate 141, aspartate 143, aspartate 145, lysine 147, and glutamate 152 each coordinate Ca(2+).

This sequence belongs to the calcineurin regulatory subunit family. In terms of assembly, composed of two components (A and B), the A component is the catalytic subunit and the B component confers calcium sensitivity.

Its function is as follows. Calcineurin is a calcium-binding and calmodulin-binding protein found in all cells from yeast to mammals, and a calcium-dependent, calmodulin-stimulated protein phosphatase. This chain is Calcineurin subunit B type 1 (CanB), found in Drosophila melanogaster (Fruit fly).